A 45-amino-acid polypeptide reads, in one-letter code: Large ribosomal subunit protein bL36 (45 aa).

The protein belongs to the bacterial ribosomal protein bL36 family.

The polypeptide is Large ribosomal subunit protein bL36 (Psychrobacter sp. (strain PRwf-1)).